The primary structure comprises 369 residues: Ferredoxin--NADP reductase 2 (369 aa).

Residues 1 to 21 (MDLSIPNPVADATRQVEGGSP) form a disordered region. Aspartate 58, glutamine 66, tyrosine 71, valine 111, phenylalanine 146, aspartate 311, and threonine 352 together coordinate FAD.

The protein belongs to the ferredoxin--NADP reductase type 2 family. Homodimer. The cofactor is FAD.

It catalyses the reaction 2 reduced [2Fe-2S]-[ferredoxin] + NADP(+) + H(+) = 2 oxidized [2Fe-2S]-[ferredoxin] + NADPH. The sequence is that of Ferredoxin--NADP reductase 2 from Cupriavidus taiwanensis (strain DSM 17343 / BCRC 17206 / CCUG 44338 / CIP 107171 / LMG 19424 / R1) (Ralstonia taiwanensis (strain LMG 19424)).